A 285-amino-acid polypeptide reads, in one-letter code: Probable endonuclease 4 (285 aa).

His-69, His-109, Glu-145, Asp-179, His-182, His-216, Asp-229, His-231, and Glu-261 together coordinate Zn(2+).

It belongs to the AP endonuclease 2 family. Zn(2+) is required as a cofactor.

It carries out the reaction Endonucleolytic cleavage to 5'-phosphooligonucleotide end-products.. Endonuclease IV plays a role in DNA repair. It cleaves phosphodiester bonds at apurinic or apyrimidinic (AP) sites, generating a 3'-hydroxyl group and a 5'-terminal sugar phosphate. The protein is Probable endonuclease 4 of Shigella boydii serotype 18 (strain CDC 3083-94 / BS512).